The primary structure comprises 328 residues: Glucokinase (328 aa).

16-21 (ADIGGT) is an ATP binding site.

Belongs to the bacterial glucokinase family.

Its subcellular location is the cytoplasm. It catalyses the reaction D-glucose + ATP = D-glucose 6-phosphate + ADP + H(+). This Neisseria gonorrhoeae (strain ATCC 700825 / FA 1090) protein is Glucokinase.